The sequence spans 141 residues: Nucleoside diphosphate kinase (141 aa).

ATP contacts are provided by lysine 11, phenylalanine 59, arginine 87, threonine 93, arginine 104, and asparagine 114. The active-site Pros-phosphohistidine intermediate is histidine 117.

It belongs to the NDK family. In terms of assembly, homotetramer. The cofactor is Mg(2+).

The protein resides in the cytoplasm. It carries out the reaction a 2'-deoxyribonucleoside 5'-diphosphate + ATP = a 2'-deoxyribonucleoside 5'-triphosphate + ADP. The catalysed reaction is a ribonucleoside 5'-diphosphate + ATP = a ribonucleoside 5'-triphosphate + ADP. Major role in the synthesis of nucleoside triphosphates other than ATP. The ATP gamma phosphate is transferred to the NDP beta phosphate via a ping-pong mechanism, using a phosphorylated active-site intermediate. This chain is Nucleoside diphosphate kinase, found in Chromobacterium violaceum (strain ATCC 12472 / DSM 30191 / JCM 1249 / CCUG 213 / NBRC 12614 / NCIMB 9131 / NCTC 9757 / MK).